We begin with the raw amino-acid sequence, 644 residues long: MIPAHWLYCLMLLLPIESCRILCQASSKSKEKVTSRPHDVCDGVCNNNGTPCFQSCPPDSEGNMKFACKAKKWHKVTETCHTLNTHSIFEEDKELYSVQSSDSTIRTHMFHRELKTIMDTLMEKCPKDLSCVIKGIERSPRMPGNIAVVVQLLHNISTTLTKDVNEEKMQSYSAMANHILNSKSISNWTFIQDRNSSCVLLQSIHSFASKLFMKEHLINISHVFIHTLGTVVSRGSLGKNFTFSMRINETSDKVTGRLLLSPEELQKVPSAFQVISIAFPTLGAILEASLLENVTVNGLVLSVILPEELKNISLIFEKIRKSGERKSQCVGWHSLESRWDWRACKTIQENSRQAVCRCRPNKLYTSFSILMSPNTLESPVLTYITYIGLGISICSLIICLAIEVLVWSQVTKTEISYLRHLCIANIAATLLMADAWFIVASFLSGPVLHHNGCVAATFFVHFFYLSVFFWMLAKALLILYGILIVFHTLPKSCLVASLFSVGYGCPLVIAIITLAVTEPGKGYLRPEACWLNWDMTKALLAFVVPALAIVVVNLITVTMVIIKTQRAAIGSSMFQEVRAIVRICKNIAILTPLLGLTWGFGIATVINGHSLAFHIIFSLLNALQVSPDAAVDSELRECVHRFCG.

Positions 1–18 (MIPAHWLYCLMLLLPIES) are cleaved as a signal peptide. Residues 19–386 (CRILCQASSK…ESPVLTYITY (368 aa)) lie on the Extracellular side of the membrane. N155, N219, N293, and N311 each carry an N-linked (GlcNAc...) asparagine glycan. One can recognise a GAIN-B domain in the interval 233–377 (SRGSLGKNFT…SILMSPNTLE (145 aa)). Intrachain disulfides connect C329–C356 and C344–C358. The tract at residues 329 to 377 (CVGWHSLESRWDWRACKTIQENSRQAVCRCRPNKLYTSFSILMSPNTLE) is GPS. Residues 387–407 (IGLGISICSLIICLAIEVLVW) traverse the membrane as a helical segment. Topologically, residues 408–422 (SQVTKTEISYLRHLC) are cytoplasmic. A helical transmembrane segment spans residues 423–443 (IANIAATLLMADAWFIVASFL). Residues 444–465 (SGPVLHHNGCVAATFFVHFFYL) lie on the Extracellular side of the membrane. Residues 466–486 (SVFFWMLAKALLILYGILIVF) form a helical membrane-spanning segment. Residues 487 to 493 (HTLPKSC) lie on the Cytoplasmic side of the membrane. Residues 494-514 (LVASLFSVGYGCPLVIAIITL) traverse the membrane as a helical segment. The Extracellular portion of the chain corresponds to 515-541 (AVTEPGKGYLRPEACWLNWDMTKALLA). Residues 542–562 (FVVPALAIVVVNLITVTMVII) form a helical membrane-spanning segment. The Cytoplasmic portion of the chain corresponds to 563–585 (KTQRAAIGSSMFQEVRAIVRICK). A helical membrane pass occupies residues 586 to 606 (NIAILTPLLGLTWGFGIATVI). Residues 607–610 (NGHS) are Extracellular-facing. A helical transmembrane segment spans residues 611-631 (LAFHIIFSLLNALQVSPDAAV).

Belongs to the G-protein coupled receptor 2 family. Adhesion G-protein coupled receptor (ADGR) subfamily. In terms of tissue distribution, mainly expressed in skin and heart, and very weakly in lung and spleen. Detected in all epidermal layers of skin.

It localises to the membrane. Orphan receptor. In Mus musculus (Mouse), this protein is Adhesion G-protein coupled receptor F2 (Adgrf2).